Consider the following 261-residue polypeptide: Metallo-beta-lactamase fold-containing protein ST1585 (261 aa).

Positions 58, 60, 62, 63, 148, 165, and 207 each coordinate Zn(2+).

The protein belongs to the metallo-beta-lactamase superfamily. In terms of assembly, monomer.

The polypeptide is Metallo-beta-lactamase fold-containing protein ST1585 (Sulfurisphaera tokodaii (strain DSM 16993 / JCM 10545 / NBRC 100140 / 7) (Sulfolobus tokodaii)).